Consider the following 311-residue polypeptide: Malate dehydrogenase (311 aa).

NAD(+) contacts are provided by residues G7–G13 and D34. The substrate site is built by R81 and R87. NAD(+) is bound by residues N94 and I117–N119. Substrate-binding residues include N119 and R153. Residue H177 is the Proton acceptor of the active site. M227 is an NAD(+) binding site.

This sequence belongs to the LDH/MDH superfamily. MDH type 1 family. In terms of assembly, homodimer.

It carries out the reaction (S)-malate + NAD(+) = oxaloacetate + NADH + H(+). Its function is as follows. Catalyzes the reversible oxidation of malate to oxaloacetate. This is Malate dehydrogenase from Shewanella sp. (strain MR-4).